The following is a 435-amino-acid chain: Nucleoredoxin (435 aa).

Position 2 is an N-acetylserine (Ser2). One can recognise a Thioredoxin domain in the interval 167-321 (PKPFREVIAG…VLELSDSNAA (155 aa)).

The protein belongs to the nucleoredoxin family. In terms of assembly, associates with the phosphatase 2A holoenzyme. Interacts with PPP2CA; the interaction is direct. Interacts with DVL1 (via PDZ domain); the interaction is direct and regulated by oxidative stress.

It localises to the cytoplasm. The protein localises to the cytosol. It is found in the nucleus. The catalysed reaction is [protein]-dithiol + NAD(+) = [protein]-disulfide + NADH + H(+). It catalyses the reaction [protein]-dithiol + NADP(+) = [protein]-disulfide + NADPH + H(+). Its function is as follows. Functions as a redox-dependent negative regulator of the Wnt signaling pathway, possibly by preventing ubiquitination of DVL3 by the BCR(KLHL12) complex. May also function as a transcriptional regulator act as a regulator of protein phosphatase 2A (PP2A). The polypeptide is Nucleoredoxin (NXN) (Homo sapiens (Human)).